Here is a 368-residue protein sequence, read N- to C-terminus: Flagellar P-ring protein (368 aa).

The N-terminal stretch at 1–22 is a signal peptide; sequence MLIPLARAVLALELLGAGAAHA.

Belongs to the FlgI family. In terms of assembly, the basal body constitutes a major portion of the flagellar organelle and consists of four rings (L,P,S, and M) mounted on a central rod.

The protein resides in the periplasm. Its subcellular location is the bacterial flagellum basal body. Functionally, assembles around the rod to form the L-ring and probably protects the motor/basal body from shearing forces during rotation. The chain is Flagellar P-ring protein from Bordetella pertussis (strain Tohama I / ATCC BAA-589 / NCTC 13251).